Consider the following 102-residue polypeptide: Putative ubiquitin-like protein FUBI-like protein ENSP00000310146 (102 aa).

The region spanning 23–99 is the Ubiquitin-like domain; that stretch reads LCPQVAYVRA…LEVVGRRLGV (77 aa).

The chain is Putative ubiquitin-like protein FUBI-like protein ENSP00000310146 from Homo sapiens (Human).